Consider the following 511-residue polypeptide: ATP synthase subunit beta, mitochondrial (511 aa).

Residues 1-33 constitute a mitochondrion transit peptide; the sequence is MVLPRLYTATSRAAFKAAKQSAPLLSTSWKRCM. Thr112 is subject to Phosphothreonine. Residue 190–197 participates in ATP binding; the sequence is GGAGVGKT. A Phosphothreonine modification is found at Thr237. Ser373 is subject to Phosphoserine.

The protein belongs to the ATPase alpha/beta chains family. F-type ATPases have 2 components, CF(1) - the catalytic core - and CF(0) - the membrane proton channel. CF(1) has five subunits: alpha(3), beta(3), gamma(1), delta(1), epsilon(1). CF(0) has three main subunits: a, b and c.

It is found in the mitochondrion. It localises to the mitochondrion inner membrane. It carries out the reaction ATP + H2O + 4 H(+)(in) = ADP + phosphate + 5 H(+)(out). Mitochondrial membrane ATP synthase (F(1)F(0) ATP synthase or Complex V) produces ATP from ADP in the presence of a proton gradient across the membrane which is generated by electron transport complexes of the respiratory chain. F-type ATPases consist of two structural domains, F(1) - containing the extramembraneous catalytic core, and F(0) - containing the membrane proton channel, linked together by a central stalk and a peripheral stalk. During catalysis, ATP synthesis in the catalytic domain of F(1) is coupled via a rotary mechanism of the central stalk subunits to proton translocation. Subunits alpha and beta form the catalytic core in F(1). Rotation of the central stalk against the surrounding alpha(3)beta(3) subunits leads to hydrolysis of ATP in three separate catalytic sites on the beta subunits. The chain is ATP synthase subunit beta, mitochondrial (ATP2) from Saccharomyces cerevisiae (strain ATCC 204508 / S288c) (Baker's yeast).